Consider the following 380-residue polypeptide: Putative 8-amino-7-oxononanoate synthase (380 aa).

R18 lines the substrate pocket. G105 to Y106 provides a ligand contact to pyridoxal 5'-phosphate. H130 is a substrate binding site. Residues S178, D204–H207, and T235–K238 contribute to the pyridoxal 5'-phosphate site. K238 is subject to N6-(pyridoxal phosphate)lysine. T352 contributes to the substrate binding site.

It belongs to the class-II pyridoxal-phosphate-dependent aminotransferase family. BioF subfamily. In terms of assembly, homodimer. It depends on pyridoxal 5'-phosphate as a cofactor.

The catalysed reaction is 6-carboxyhexanoyl-[ACP] + L-alanine + H(+) = (8S)-8-amino-7-oxononanoate + holo-[ACP] + CO2. It functions in the pathway cofactor biosynthesis; biotin biosynthesis. Functionally, catalyzes the decarboxylative condensation of pimeloyl-[acyl-carrier protein] and L-alanine to produce 8-amino-7-oxononanoate (AON), [acyl-carrier protein], and carbon dioxide. This chain is Putative 8-amino-7-oxononanoate synthase (bioF), found in Glaesserella parasuis serovar 5 (strain SH0165) (Haemophilus parasuis).